The following is a 454-amino-acid chain: Phosphoglucosamine mutase (454 aa).

The active-site Phosphoserine intermediate is the Ser101. Mg(2+) is bound by residues Ser101, Asp243, Asp245, and Asp247. Phosphoserine is present on Ser101.

Belongs to the phosphohexose mutase family. The cofactor is Mg(2+). Post-translationally, activated by phosphorylation.

The enzyme catalyses alpha-D-glucosamine 1-phosphate = D-glucosamine 6-phosphate. Catalyzes the conversion of glucosamine-6-phosphate to glucosamine-1-phosphate. In Geobacter sp. (strain M21), this protein is Phosphoglucosamine mutase.